The sequence spans 263 residues: Endonuclease 8 (263 aa).

Proline 2 (schiff-base intermediate with DNA) is an active-site residue. Glutamate 3 (proton donor) is an active-site residue. Catalysis depends on lysine 53, which acts as the Proton donor; for beta-elimination activity. Glutamine 70, arginine 125, and asparagine 169 together coordinate DNA. The segment at 229–263 (KVFHRDGELCERCGGIIEKTTLSSRPFYWCPGCQH) adopts an FPG-type zinc-finger fold. The active-site Proton donor; for delta-elimination activity is the arginine 253.

It belongs to the FPG family. Requires Zn(2+) as cofactor.

It carries out the reaction 2'-deoxyribonucleotide-(2'-deoxyribose 5'-phosphate)-2'-deoxyribonucleotide-DNA = a 3'-end 2'-deoxyribonucleotide-(2,3-dehydro-2,3-deoxyribose 5'-phosphate)-DNA + a 5'-end 5'-phospho-2'-deoxyribonucleoside-DNA + H(+). Involved in base excision repair of DNA damaged by oxidation or by mutagenic agents. Acts as a DNA glycosylase that recognizes and removes damaged bases. Has a preference for oxidized pyrimidines, such as thymine glycol, 5,6-dihydrouracil and 5,6-dihydrothymine. Has AP (apurinic/apyrimidinic) lyase activity and introduces nicks in the DNA strand. Cleaves the DNA backbone by beta-delta elimination to generate a single-strand break at the site of the removed base with both 3'- and 5'-phosphates. This Shigella boydii serotype 4 (strain Sb227) protein is Endonuclease 8.